A 342-amino-acid polypeptide reads, in one-letter code: Aquaporin-7 (342 aa).

The Cytoplasmic segment spans residues 1 to 36; that stretch reads MVQASGHRRSTRGSKMVSWSVIAKIQEILQRKMVRE. Residue Ser-20 is modified to Phosphoserine. The helical transmembrane segment at 37-54 threads the bilayer; it reads FLAEFMSTYVMMVFGLGS. At 55–67 the chain is on the extracellular side; sequence VAHMVLNKKYGSY. Residues 68 to 85 traverse the membrane as a helical segment; the sequence is LGVNLGFGFGVTMGVHVA. Residues 86-89 are Cytoplasmic-facing; it reads GRIS. The discontinuously helical intramembrane region spans 90–103; the sequence is GAHMNAAVTFANCA. The short motif at 94–96 is the NPA 1 element; that stretch reads NAA. Over 104-111 the chain is Cytoplasmic; the sequence is LGRVPWRK. Residues 112-132 form a helical membrane-spanning segment; sequence FPVYVLGQFLGSFLAAATIYS. The Extracellular portion of the chain corresponds to 133–170; sequence LFYTAILHFSGGQLMVTGPVATAGIFATYLPDHMTLWR. A helical membrane pass occupies residues 171 to 188; the sequence is GFLNEAWLTGMLQLCLFA. Over 189 to 200 the chain is Cytoplasmic; that stretch reads ITDQENNPALPG. Residues 201–217 traverse the membrane as a helical segment; that stretch reads TEALVIGILVVIIGVSL. The Extracellular portion of the chain corresponds to 218-221; the sequence is GMNT. Positions 222–235 form an intramembrane region, discontinuously helical; that stretch reads GYAINPSRDLPPRI. Positions 226–228 match the NPA 2 motif; sequence NPS. Residues 236 to 253 lie on the Extracellular side of the membrane; that stretch reads FTFIAGWGKQVFSNGENW. A helical transmembrane segment spans residues 254–275; that stretch reads WWVPVVAPLLGAYLGGIIYLVF. Over 276–342 the chain is Cytoplasmic; that stretch reads IGSTIPREPL…LHESMALEHF (67 aa).

It belongs to the MIP/aquaporin (TC 1.A.8) family. As to quaternary structure, homotetramer; each monomer provides an independent glycerol/water pore. Two homotetramers on opposing membranes can dimerize, forming a cell-cell junction. Interacts with PLIN1. Post-translationally, phosphorylation by PKA could prevent the interaction with PLIN1. In terms of tissue distribution, detected in the sperm head (at protein level). Detected in white adipose tissue.

Its subcellular location is the cell membrane. The protein resides in the cytoplasmic vesicle membrane. It localises to the lipid droplet. The catalysed reaction is glycerol(in) = glycerol(out). It catalyses the reaction H2O(in) = H2O(out). It carries out the reaction urea(in) = urea(out). Glycerol transport is regulated by pH, with the porin being permeable to glycerol at pH 7.4 but not at pH 5.5. Water permeability, however, is not influenced by pH. Inhibited by mercury ions. Its function is as follows. Aquaglyceroporins form homotetrameric transmembrane channels, with each monomer independently mediating glycerol and water transport across the plasma membrane along their osmotic gradient. Could also be permeable to urea. Mediates the efflux of glycerol, formed upon triglyceride hydrolysis, to avoid its accumulation in adipocytes and to make it available to other tissues. In the kidney, mediates the reabsorption of glycerol, preventing its loss in urine, again participating to energy homeostasis. In pancreatic beta cells, it also mediates the efflux of glycerol, regulating its intracellular levels. In Homo sapiens (Human), this protein is Aquaporin-7.